The primary structure comprises 407 residues: Imidazolonepropionase (407 aa).

Residues His-68 and His-70 each contribute to the Fe(3+) site. His-68 and His-70 together coordinate Zn(2+). 4-imidazolone-5-propanoate is bound by residues Arg-77, Tyr-140, and His-173. Tyr-140 is an N-formimidoyl-L-glutamate binding site. His-236 lines the Fe(3+) pocket. Position 236 (His-236) interacts with Zn(2+). Gln-239 is a binding site for 4-imidazolone-5-propanoate. Asp-311 lines the Fe(3+) pocket. Asp-311 is a Zn(2+) binding site. N-formimidoyl-L-glutamate contacts are provided by Asn-313 and Gly-315. Position 316 (Thr-316) interacts with 4-imidazolone-5-propanoate.

This sequence belongs to the metallo-dependent hydrolases superfamily. HutI family. Requires Zn(2+) as cofactor. Fe(3+) is required as a cofactor.

Its subcellular location is the cytoplasm. It carries out the reaction 4-imidazolone-5-propanoate + H2O = N-formimidoyl-L-glutamate. It functions in the pathway amino-acid degradation; L-histidine degradation into L-glutamate; N-formimidoyl-L-glutamate from L-histidine: step 3/3. Its function is as follows. Catalyzes the hydrolytic cleavage of the carbon-nitrogen bond in imidazolone-5-propanoate to yield N-formimidoyl-L-glutamate. It is the third step in the universal histidine degradation pathway. This is Imidazolonepropionase from Stenotrophomonas maltophilia (strain R551-3).